Reading from the N-terminus, the 173-residue chain is uncharacterized protein (173 aa).

A disordered region spans residues histidine 80–aspartate 107. Positions lysine 85–aspartate 107 are enriched in basic and acidic residues.

This is an uncharacterized protein from Autographa californica nuclear polyhedrosis virus (AcMNPV).